Reading from the N-terminus, the 277-residue chain is Cation-dependent mannose-6-phosphate receptor (277 aa).

The signal sequence occupies residues 1–26; the sequence is MFPFYSCWRTGLLLLLLAVAVRESWQ. The Lumenal portion of the chain corresponds to 27–185; the sequence is TEEKTCDLVG…SLACSPEISH (159 aa). Residues 30–181 form the MRH domain; the sequence is KTCDLVGEKG…EMDSSLACSP (152 aa). C32 and C78 are oxidised to a cystine. N57, N83, N94, N107, and N113 each carry an N-linked (GlcNAc...) asparagine glycan. 2 disulfides stabilise this stretch: C132-C167 and C145-C179. The chain crosses the membrane as a helical span at residues 186-210; it reads LSVGSILLVTFASLVAVYVVGGFLY. Over 211–277 the chain is Cytoplasmic; it reads QRLVVGAKGM…EERDDHLLPM (67 aa). The interval 256-277 is disordered; that stretch reads RGVGDDQLGEESEERDDHLLPM. The residue at position 267 (S267) is a Phosphoserine.

As to quaternary structure, homodimer. Binds GGA1, GGA2 and GGA3.

Its subcellular location is the lysosome membrane. Functionally, transport of phosphorylated lysosomal enzymes from the Golgi complex and the cell surface to lysosomes. Lysosomal enzymes bearing phosphomannosyl residues bind specifically to mannose-6-phosphate receptors in the Golgi apparatus and the resulting receptor-ligand complex is transported to an acidic prelyosomal compartment where the low pH mediates the dissociation of the complex. This is Cation-dependent mannose-6-phosphate receptor (M6PR) from Homo sapiens (Human).